A 468-amino-acid chain; its full sequence is ATP synthase subunit beta (468 aa).

155–162 serves as a coordination point for ATP; it reads GGAGVGKT.

The protein belongs to the ATPase alpha/beta chains family. F-type ATPases have 2 components, CF(1) - the catalytic core - and CF(0) - the membrane proton channel. CF(1) has five subunits: alpha(3), beta(3), gamma(1), delta(1), epsilon(1). CF(0) has three main subunits: a(1), b(2) and c(9-12). The alpha and beta chains form an alternating ring which encloses part of the gamma chain. CF(1) is attached to CF(0) by a central stalk formed by the gamma and epsilon chains, while a peripheral stalk is formed by the delta and b chains.

The protein localises to the cell membrane. The catalysed reaction is ATP + H2O + 4 H(+)(in) = ADP + phosphate + 5 H(+)(out). Functionally, produces ATP from ADP in the presence of a proton gradient across the membrane. The catalytic sites are hosted primarily by the beta subunits. The chain is ATP synthase subunit beta from Bacillus cereus (strain G9842).